Consider the following 263-residue polypeptide: 4-hydroxy-2-oxo-heptane-1,7-dioate aldolase (263 aa).

The active-site Proton acceptor is His-45. Gln-147 provides a ligand contact to substrate. An a divalent metal cation-binding site is contributed by Glu-149. Residues Ala-174 and Asp-175 each contribute to the substrate site. Asp-175 is a binding site for a divalent metal cation.

It belongs to the HpcH/HpaI aldolase family. In terms of assembly, homohexamer; trimer of dimers. It depends on a divalent metal cation as a cofactor.

It carries out the reaction 4-hydroxy-2-oxoheptanedioate = succinate semialdehyde + pyruvate. The protein operates within aromatic compound metabolism; 4-hydroxyphenylacetate degradation; pyruvate and succinate semialdehyde from 4-hydroxyphenylacetate: step 7/7. Functionally, catalyzes the reversible retro-aldol cleavage of 4-hydroxy-2-ketoheptane-1,7-dioate (HKHD) to pyruvate and succinic semialdehyde. The sequence is that of 4-hydroxy-2-oxo-heptane-1,7-dioate aldolase from Salmonella paratyphi A (strain ATCC 9150 / SARB42).